Here is a 526-residue protein sequence, read N- to C-terminus: Glutamate--cysteine ligase (526 aa).

This sequence belongs to the glutamate--cysteine ligase type 1 family. Type 1 subfamily.

The catalysed reaction is L-cysteine + L-glutamate + ATP = gamma-L-glutamyl-L-cysteine + ADP + phosphate + H(+). The protein operates within sulfur metabolism; glutathione biosynthesis; glutathione from L-cysteine and L-glutamate: step 1/2. This is Glutamate--cysteine ligase from Proteus mirabilis (strain HI4320).